The sequence spans 601 residues: MTAKPIDTIRNFSIVAHIDHGKSTLADRLIQLTGALSAREMTEQVLDSMDIERERGITIKAQTVRLDYTAQDGRTYILNLMDTPGHVDFTYEVSRSLAACEGSLLVVDASQGVEAQTLANVYQAIDANHEIVPVLNKIDLPAAEPDRVKQQIEEVIGIDASEAVPISAKTGLNIEAVLEAIVAKLPPPKGDRAAPLKALLVDSWYDVYLGVVVLVRIVDGVLKKGMTIRMMGADAVYGVDRIGVFRPKMQDVAELGPGEVGFLTASIKEVADTRVGDTITEDRRPTDSPLPGFKPVQPVVFCGLFPVDAAEFENLRAAMGKLRLNDASFSYEMETSAALGFGFRCGFLGLLHLEIIQERLEREFNLDLISTAPSVVYRLNMSDGTMRELHNPADMPDVMKIDTIEEPWIRATILTPDDYLGSVLKLCQDRRGTQIDLNYVGKRAMVVYDLPLNEVVFDFYDRLKSISKGYASFDYHISDYREGDLVKMSILVNSEPVDALSMLVHRTRAESRGRAMCEKLKDLIPRHLFQIPVQAAIGGKIIARETIRALSKDVTAKCYGGDISRKRKLLDKQKEGKKRMRQFGKVEIPQEAFIAALKMDS.

Positions 7–189 (DTIRNFSIVA…AIVAKLPPPK (183 aa)) constitute a tr-type G domain. Residues 19-24 (DHGKST) and 136-139 (NKID) contribute to the GTP site.

Belongs to the TRAFAC class translation factor GTPase superfamily. Classic translation factor GTPase family. LepA subfamily.

It is found in the cell inner membrane. The catalysed reaction is GTP + H2O = GDP + phosphate + H(+). Required for accurate and efficient protein synthesis under certain stress conditions. May act as a fidelity factor of the translation reaction, by catalyzing a one-codon backward translocation of tRNAs on improperly translocated ribosomes. Back-translocation proceeds from a post-translocation (POST) complex to a pre-translocation (PRE) complex, thus giving elongation factor G a second chance to translocate the tRNAs correctly. Binds to ribosomes in a GTP-dependent manner. This Methylobacterium nodulans (strain LMG 21967 / CNCM I-2342 / ORS 2060) protein is Elongation factor 4.